The following is a 442-amino-acid chain: Protein translocase subunit SecF (442 aa).

The interval methionine 1–alanine 39 is disordered. The next 6 membrane-spanning stretches (helical) occupy residues tryptophan 67 to phenylalanine 87, isoleucine 187 to threonine 207, alanine 218 to phenylalanine 238, alanine 243 to phenylalanine 263, leucine 301 to glycine 321, and leucine 331 to threonine 351. The segment at valine 366–arginine 442 is disordered. A compositionally biased stretch (low complexity) spans glutamine 402–arginine 432. Over residues proline 433–arginine 442 the composition is skewed to basic residues.

This sequence belongs to the SecD/SecF family. SecF subfamily. Forms a complex with SecD. Part of the essential Sec protein translocation apparatus which comprises SecA, SecYEG and auxiliary proteins SecDF. Other proteins may also be involved.

It localises to the cell membrane. Its function is as follows. Part of the Sec protein translocase complex. Interacts with the SecYEG preprotein conducting channel. SecDF uses the proton motive force (PMF) to complete protein translocation after the ATP-dependent function of SecA. The chain is Protein translocase subunit SecF from Mycobacterium tuberculosis (strain ATCC 25618 / H37Rv).